We begin with the raw amino-acid sequence, 91 residues long: Islet amyloid polypeptide (91 aa).

Positions 1 to 22 are cleaved as a signal peptide; sequence MCLLQLPVVLLLLSAALNTLKA. Positions 23 to 34 are excised as a propeptide; the sequence is TPIASDTDHRVD. The cysteines at positions 38 and 43 are disulfide-linked. Residue Tyr-73 is modified to Tyrosine amide. Residues 77–91 constitute a propeptide that is removed on maturation; that stretch reads NAEVVDVELLHYLPL.

This sequence belongs to the calcitonin family. Can form homodimers. Interacts with IDE and INS. Interaction with INS inhibits homodimerization and fibril formation.

It localises to the secreted. Amylin/IAPP is a glucoregulatory peptide hormone that plays an important role in the regulation of energy homeostasis. Selectively inhibits insulin-stimulated glucose utilization and glycogen deposition in muscle, while not affecting adipocyte glucose metabolism. IAPP function is mediated by the CALCR-RAMPs (AMYRs) receptor complexes. Amylin can also bind CALCR receptor in the absence of RAMPs, although it is more selective for AMYRs. This Octodon degus (Degu) protein is Islet amyloid polypeptide (IAPP).